The sequence spans 116 residues: Large ribosomal subunit protein bL17 (116 aa).

Belongs to the bacterial ribosomal protein bL17 family. In terms of assembly, part of the 50S ribosomal subunit. Contacts protein L32.

The sequence is that of Large ribosomal subunit protein bL17 from Parasynechococcus marenigrum (strain WH8102).